A 127-amino-acid polypeptide reads, in one-letter code: UPF0325 protein VP2321 (127 aa).

Belongs to the UPF0325 family.

In Vibrio parahaemolyticus serotype O3:K6 (strain RIMD 2210633), this protein is UPF0325 protein VP2321.